A 610-amino-acid chain; its full sequence is Probable pleckstrin homology domain-containing family N member 1 (610 aa).

The disordered stretch occupies residues 1–30 (MGNSHCVPQAPRRLRASFSRKPSLKGNRED). Gly-2 carries N-myristoyl glycine lipidation. The interaction with C1QBP stretch occupies residues 61–100 (TDIPGPEHHPENLEQPFLSVFKKGWRRTPVRNLGKVVHYS). PH domains follow at residues 96 to 192 (VVHY…MALL) and 227 to 324 (AICA…SRRD). Tyr-307 bears the Phosphotyrosine mark. 4 disordered regions span residues 327–357 (HLPP…SNGR), 371–431 (QSLP…PLPL), 443–473 (LDSG…ATSR), and 493–610 (PGPD…IQWI). Composition is skewed to polar residues over residues 371–380 (QSLPESSVPT) and 391–402 (NQTDSNCVSTGQ). Tyr-462 bears the Phosphotyrosine mark. A compositionally biased stretch (low complexity) spans 504-526 (VSVSVPVSESSSGISSSPGPLGS).

In terms of assembly, found in a complex with cytochrome c mRNA and various ribosomal proteins. Interacts with C1QBP, ELAVL1 and BID. Post-translationally, phosphorylation is essential for its mitochondrial localization and regulates its interaction with C1QBP. In terms of tissue distribution, testis and adipose tissue (at protein level). Ubiquitous.

It localises to the cell membrane. It is found in the mitochondrion membrane. Its subcellular location is the mitochondrion. Its function is as follows. Controls the stability of the leptin mRNA harboring an AU-rich element (ARE) in its 3' UTR, in cooperation with the RNA stabilizer ELAVL1. Decreases the stability of the leptin mRNA by antagonizing the function of ELAVL1 by inducing its atypical recruitment from the nucleus to the cytosol. Binds to cardiolipin (CL), phosphatidic acid (PA), phosphatidylinositol 4-phosphate (PtdIns(4)P) and phosphatidylserine (PS). The polypeptide is Probable pleckstrin homology domain-containing family N member 1 (Plekhn1) (Mus musculus (Mouse)).